A 417-amino-acid polypeptide reads, in one-letter code: Membrane protein UL43 (417 aa).

Positions 1–21 (MLRNDSHRAVSPEDGQGRVDD) are disordered. Helical transmembrane passes span 57–77 (GPYA…LGFM), 90–110 (IYAW…SLGE), 119–139 (APGP…LLVL), 146–166 (LFLL…VGGL), and 175–195 (WWIG…GPGA). The disordered stretch occupies residues 217-254 (AGESLSRRPPEDPERPGVPGPPSPPTPQRSHGPPADEV). A compositionally biased stretch (basic and acidic residues) spans 221 to 231 (LSRRPPEDPER). The span at 232–243 (PGVPGPPSPPTP) shows a compositional bias: pro residues. 5 consecutive transmembrane segments (helical) span residues 263 to 283 (ENVW…VKTV), 291 to 311 (PGPG…AVAL), 323 to 343 (LTDP…GLVF), 348 to 368 (VVVY…VLGL), and 389 to 409 (GLFF…CPPG).

The protein belongs to the alphaherpesvirinae HHV-1 UL43 family.

It localises to the membrane. The chain is Membrane protein UL43 from Human herpesvirus 1 (strain 17) (HHV-1).